The sequence spans 290 residues: Elongation factor Ts (290 aa).

The segment at 79–82 (TDFV) is involved in Mg(2+) ion dislocation from EF-Tu.

This sequence belongs to the EF-Ts family.

The protein localises to the cytoplasm. In terms of biological role, associates with the EF-Tu.GDP complex and induces the exchange of GDP to GTP. It remains bound to the aminoacyl-tRNA.EF-Tu.GTP complex up to the GTP hydrolysis stage on the ribosome. This is Elongation factor Ts from Pseudoalteromonas atlantica (strain T6c / ATCC BAA-1087).